A 545-amino-acid chain; its full sequence is Chaperonin GroEL (545 aa).

ATP is bound by residues 30–33, lysine 51, 87–91, glycine 415, and aspartate 495; these read TLGP and DGTTT.

Belongs to the chaperonin (HSP60) family. As to quaternary structure, forms a cylinder of 14 subunits composed of two heptameric rings stacked back-to-back. Interacts with the co-chaperonin GroES.

The protein localises to the cytoplasm. It catalyses the reaction ATP + H2O + a folded polypeptide = ADP + phosphate + an unfolded polypeptide.. Together with its co-chaperonin GroES, plays an essential role in assisting protein folding. The GroEL-GroES system forms a nano-cage that allows encapsulation of the non-native substrate proteins and provides a physical environment optimized to promote and accelerate protein folding. This chain is Chaperonin GroEL, found in Shewanella sp. (strain MR-7).